Reading from the N-terminus, the 179-residue chain is Large ribosomal subunit protein uL6 (179 aa).

Belongs to the universal ribosomal protein uL6 family. As to quaternary structure, part of the 50S ribosomal subunit.

Functionally, this protein binds to the 23S rRNA, and is important in its secondary structure. It is located near the subunit interface in the base of the L7/L12 stalk, and near the tRNA binding site of the peptidyltransferase center. In Bacillus subtilis (strain 168), this protein is Large ribosomal subunit protein uL6.